We begin with the raw amino-acid sequence, 327 residues long: Quinone oxidoreductase 1 (327 aa).

NADP(+) is bound by residues 42–46 (FIDTY), tyrosine 130, 152–153 (GV), 173–177 (GTAQK), tyrosine 192, serine 216, 238–241 (FGNS), 264–266 (PSL), and arginine 317.

This sequence belongs to the zinc-containing alcohol dehydrogenase family. Quinone oxidoreductase subfamily. Homodimer.

It carries out the reaction 2 a quinone + NADPH + H(+) = 2 a 1,4-benzosemiquinone + NADP(+). The sequence is that of Quinone oxidoreductase 1 (qorA) from Escherichia coli (strain K12).